A 361-amino-acid polypeptide reads, in one-letter code: Chorismate synthase (361 aa).

NADP(+) is bound by residues R48 and R54. FMN-binding positions include 125-127 (RSS), 238-239 (NA), G278, 293-297 (KPTSS), and R319.

The protein belongs to the chorismate synthase family. As to quaternary structure, homotetramer. Requires FMNH2 as cofactor.

The catalysed reaction is 5-O-(1-carboxyvinyl)-3-phosphoshikimate = chorismate + phosphate. It functions in the pathway metabolic intermediate biosynthesis; chorismate biosynthesis; chorismate from D-erythrose 4-phosphate and phosphoenolpyruvate: step 7/7. In terms of biological role, catalyzes the anti-1,4-elimination of the C-3 phosphate and the C-6 proR hydrogen from 5-enolpyruvylshikimate-3-phosphate (EPSP) to yield chorismate, which is the branch point compound that serves as the starting substrate for the three terminal pathways of aromatic amino acid biosynthesis. This reaction introduces a second double bond into the aromatic ring system. In Escherichia coli O139:H28 (strain E24377A / ETEC), this protein is Chorismate synthase.